The primary structure comprises 206 residues: MTDSNGPKDNNQDQAQAAADPVVSKPYIMPDDPEDGANEALIKEAAEARDKMLRTLAEMENLRRRTQKEVADARTYGVSAFARDVLEIADNLQRALDAVPAEARANADAGLKGLIEGVELTERSLINALEKNGVRKFDPSGEKFDPNFQQAMYEVPDPSVPAGTVVQVVQAGFMIGERVLRPALVGVAKGGAKPAPAATNGTDTTA.

The segment at 1-36 (MTDSNGPKDNNQDQAQAAADPVVSKPYIMPDDPEDG) is disordered.

The protein belongs to the GrpE family. Homodimer.

The protein resides in the cytoplasm. Participates actively in the response to hyperosmotic and heat shock by preventing the aggregation of stress-denatured proteins, in association with DnaK and GrpE. It is the nucleotide exchange factor for DnaK and may function as a thermosensor. Unfolded proteins bind initially to DnaJ; upon interaction with the DnaJ-bound protein, DnaK hydrolyzes its bound ATP, resulting in the formation of a stable complex. GrpE releases ADP from DnaK; ATP binding to DnaK triggers the release of the substrate protein, thus completing the reaction cycle. Several rounds of ATP-dependent interactions between DnaJ, DnaK and GrpE are required for fully efficient folding. The polypeptide is Protein GrpE (Rhodopseudomonas palustris (strain HaA2)).